The sequence spans 359 residues: DNA replication and repair protein RecF (359 aa).

Gly-30–Thr-37 serves as a coordination point for ATP.

Belongs to the RecF family.

The protein localises to the cytoplasm. Functionally, the RecF protein is involved in DNA metabolism; it is required for DNA replication and normal SOS inducibility. RecF binds preferentially to single-stranded, linear DNA. It also seems to bind ATP. The sequence is that of DNA replication and repair protein RecF from Psychromonas ingrahamii (strain DSM 17664 / CCUG 51855 / 37).